We begin with the raw amino-acid sequence, 228 residues long: Protein Thf1 (228 aa).

A coiled-coil region spans residues 201–223; the sequence is IKRSKEVVDELSQTERRKREERA. The disordered stretch occupies residues 209–228; it reads DELSQTERRKREERAVSQPG.

The protein belongs to the THF1 family.

May be involved in photosynthetic membrane biogenesis. This is Protein Thf1 from Gloeobacter violaceus (strain ATCC 29082 / PCC 7421).